The primary structure comprises 123 residues: Fluoride-specific ion channel FluC 2 (123 aa).

Helical transmembrane passes span 1 to 21 (MTML…FLLD) and 30 to 50 (VPVP…LGLI). 2 residues coordinate Na(+): Gly74 and Thr77. A helical membrane pass occupies residues 99-119 (ALHCMGMAIAGVLAAILGLAL).

The protein belongs to the fluoride channel Fluc/FEX (TC 1.A.43) family.

The protein localises to the cell membrane. It carries out the reaction fluoride(in) = fluoride(out). With respect to regulation, na(+) is not transported, but it plays an essential structural role and its presence is essential for fluoride channel function. Fluoride-specific ion channel. Important for reducing fluoride concentration in the cell, thus reducing its toxicity. This Cutibacterium acnes (strain DSM 16379 / KPA171202) (Propionibacterium acnes) protein is Fluoride-specific ion channel FluC 2.